Consider the following 382-residue polypeptide: Alanine racemase (382 aa).

Lysine 39 functions as the Proton acceptor; specific for D-alanine in the catalytic mechanism. Lysine 39 is subject to N6-(pyridoxal phosphate)lysine. Arginine 138 contacts substrate. Tyrosine 265 functions as the Proton acceptor; specific for L-alanine in the catalytic mechanism. Methionine 312 serves as a coordination point for substrate.

This sequence belongs to the alanine racemase family. It depends on pyridoxal 5'-phosphate as a cofactor.

The catalysed reaction is L-alanine = D-alanine. The protein operates within amino-acid biosynthesis; D-alanine biosynthesis; D-alanine from L-alanine: step 1/1. Functionally, catalyzes the interconversion of L-alanine and D-alanine. May also act on other amino acids. The protein is Alanine racemase (alr) of Staphylococcus epidermidis (strain ATCC 35984 / DSM 28319 / BCRC 17069 / CCUG 31568 / BM 3577 / RP62A).